Reading from the N-terminus, the 1036-residue chain is Cysteine-rich motor neuron 1 protein (1036 aa).

An N-terminal signal peptide occupies residues 1–34; it reads MYLVAGDRGLAGCGHLLVSLLGLLLLLARSGTRA. An IGFBP N-terminal domain is found at 35 to 112; sequence LVCLPCDESK…EYEAGVCEDE (78 aa). Over 35–939 the chain is Extracellular; the sequence is LVCLPCDESK…HPSEDSSLDS (905 aa). 4 disulfides stabilise this stretch: Cys-37/Cys-60, Cys-40/Cys-62, Cys-45/Cys-63, and Cys-51/Cys-66. An N-linked (GlcNAc...) asparagine glycan is attached at Asn-71. Cystine bridges form between Cys-74–Cys-90 and Cys-84–Cys-109. Residue Asn-113 is glycosylated (N-linked (GlcNAc...) asparagine). The Cell attachment site signature appears at 314 to 316; the sequence is RGD. An N-linked (GlcNAc...) asparagine glycan is attached at Asn-330. VWFC domains are found at residues 334-391 and 401-457; these read PACV…PVCE and AGCY…PVCE. Antistasin-like domains lie at 469–498, 505–532, 539–564, and 567–592; these read CGEL…TCQC, CSER…ICEC, CRPI…ICRC, and CPEL…ICKC. N-linked (GlcNAc...) asparagine glycosylation occurs at Asn-474. VWFC domains lie at 606 to 663 and 677 to 735; these read GTCL…PSCA and SICH…PQCT. Asn-746 is a glycosylation site (N-linked (GlcNAc...) asparagine). VWFC domains are found at residues 751 to 809 and 817 to 874; these read NYCK…PYCI and VVCH…PMCP. A helical transmembrane segment spans residues 940–960; sequence IASVVVPIIICLSIIIAFLFI. Residues 961–1036 lie on the Cytoplasmic side of the membrane; the sequence is NQKKQWIPLL…LQADNFYQTV (76 aa). Thr-1035 bears the Phosphothreonine mark.

Interacts with BMP4 and BMP7. N-glycosylated. In terms of tissue distribution, expressed in pancreas, kidney, skeletal muscle, lung, placenta, brain, heart, spleen, liver and small intestine. Expressed in blood vessels (at protein level).

Its subcellular location is the secreted. The protein localises to the cell membrane. Its function is as follows. May play a role in CNS development by interacting with growth factors implicated in motor neuron differentiation and survival. May play a role in capillary formation and maintenance during angiogenesis. Modulates BMP activity by affecting its processing and delivery to the cell surface. In Homo sapiens (Human), this protein is Cysteine-rich motor neuron 1 protein (CRIM1).